We begin with the raw amino-acid sequence, 71 residues long: Small ribosomal subunit protein bS18 (71 aa).

This sequence belongs to the bacterial ribosomal protein bS18 family. Part of the 30S ribosomal subunit. Forms a tight heterodimer with protein bS6.

Functionally, binds as a heterodimer with protein bS6 to the central domain of the 16S rRNA, where it helps stabilize the platform of the 30S subunit. The protein is Small ribosomal subunit protein bS18 of Synechocystis sp. (strain ATCC 27184 / PCC 6803 / Kazusa).